Reading from the N-terminus, the 359-residue chain is Membrane-bound lytic murein transglycosylase C (359 aa).

The N-terminal stretch at 1–16 is a signal peptide; it reads MKKYLALALIAPLLIS. Residue Cys-17 is the site of N-palmitoyl cysteine attachment. Cys-17 carries the S-diacylglycerol cysteine lipid modification.

It belongs to the transglycosylase Slt family.

The protein localises to the cell outer membrane. It carries out the reaction Exolytic cleavage of the (1-&gt;4)-beta-glycosidic linkage between N-acetylmuramic acid (MurNAc) and N-acetylglucosamine (GlcNAc) residues in peptidoglycan, from either the reducing or the non-reducing ends of the peptidoglycan chains, with concomitant formation of a 1,6-anhydrobond in the MurNAc residue.. In terms of biological role, murein-degrading enzyme. May play a role in recycling of muropeptides during cell elongation and/or cell division. The polypeptide is Membrane-bound lytic murein transglycosylase C (Escherichia coli (strain SE11)).